Reading from the N-terminus, the 160-residue chain is pH-gated potassium channel KcsA (160 aa).

Residues 1 to 27 (MPPMLSGLLARLVKLLLGRHGSALHWR) are Cytoplasmic-facing. A helical membrane pass occupies residues 28 to 50 (AAGAATVLLVIVLLAGSYLAVLA). Residues 51 to 61 (ERGAPGAQLIT) lie on the Extracellular side of the membrane. The helical; Pore-forming intramembrane region spans 62–72 (YPRALWWSVET). The pore-forming intramembrane region spans 73 to 80 (ATTVGYGD). Positions 75–80 (TVGYGD) match the Selectivity filter motif. Over 81–87 (LYPVTLW) the chain is Extracellular. A helical transmembrane segment spans residues 88-111 (GRLVAVVVMVAGITSFGLVTAALA). Topologically, residues 112–160 (TWFVGREQERRGHFVRHSEKAAEEAYTRTTRALHERFDRLERMLDDNRR) are cytoplasmic.

Belongs to the potassium channel family. Homotetramer.

The protein resides in the cell membrane. In terms of biological role, acts as a pH-gated potassium ion channel; changing the cytosolic pH from 7 to 4 opens the channel. The polypeptide is pH-gated potassium channel KcsA (kcsA) (Streptomyces coelicolor (strain ATCC BAA-471 / A3(2) / M145)).